The chain runs to 376 residues: MSSGDGQQSQALTKPSFSEVQASALVESVFGLKVSKIQPLPSYDDQNFHVCIARTKVTTDGPNECVLKISNTESSKTPDLIEVQTHIIMFLRAAGFPTASVCRTKGDNVSSLVSVDSGSEVKSYLVRLLTYLPGRPIAEIPIGPQLLYEIGRLAAKLDKTLEKFHHPKLSSLHRENFIWNLKSVPLLEKYLYALGQNRNREIVEQVIQLFKDEVMTSLSHFRECINHGDLNDHNILIVSSESAFGDAVYQVSGILDFDDMSYGYYVFEVAITIMYMMIESKTPIQVGGHVLAGFESVVPLTPVERGALFLLVCSRFCQSLVLAAYSCQLYPENEEYLMITAKTGWKHLQQMFDMGRKAVEEIWFETAKSYESGISM.

The active-site Proton acceptor is the aspartate 229.

It belongs to the aminoglycoside phosphotransferase family.

The protein localises to the cytoplasm. It catalyses the reaction (5R)-5-hydroxy-L-lysine + GTP = (5R)-5-phosphooxy-L-lysine + GDP + H(+). In terms of biological role, catalyzes the GTP-dependent phosphorylation of 5-hydroxy-L-lysine. The chain is Hydroxylysine kinase (HYKK) from Bos taurus (Bovine).